Reading from the N-terminus, the 167-residue chain is Ubiquitin-fold modifier-conjugating enzyme 1 (167 aa).

Residue cysteine 116 is the Glycyl thioester intermediate of the active site.

This sequence belongs to the ubiquitin-conjugating enzyme family. UFC1 subfamily.

In terms of biological role, E2-like enzyme which forms an intermediate with UFM1 via a thioester linkage. This chain is Ubiquitin-fold modifier-conjugating enzyme 1, found in Anopheles gambiae (African malaria mosquito).